Reading from the N-terminus, the 91-residue chain is MNIALKRINYLINISRVSDNPERCIDLMEKISKRMDITLNHDIKLQYCKVCKMPYRNPVIRLKNGFVLIHCDHCGNTRRIKIRDHSVSSSK.

Zn(2+) is bound by residues Cys-48, Cys-51, Cys-71, and Cys-74.

This sequence belongs to the eukaryotic/archaeal RNase P protein component 4 family. In terms of assembly, consists of a catalytic RNA component and at least 4-5 protein subunits. Requires Zn(2+) as cofactor.

It localises to the cytoplasm. The catalysed reaction is Endonucleolytic cleavage of RNA, removing 5'-extranucleotides from tRNA precursor.. Its function is as follows. Part of ribonuclease P, a protein complex that generates mature tRNA molecules by cleaving their 5'-ends. In Picrophilus torridus (strain ATCC 700027 / DSM 9790 / JCM 10055 / NBRC 100828 / KAW 2/3), this protein is Ribonuclease P protein component 4.